A 132-amino-acid polypeptide reads, in one-letter code: Large ribosomal subunit protein uL14 (132 aa).

Belongs to the universal ribosomal protein uL14 family. As to quaternary structure, the L3/L14/L24e cluster may contact the 16S rRNA in 2 intersubunit bridges. Part of the 50S ribosomal subunit. Forms a cluster with proteins L3 and L24e.

Its function is as follows. Forms part of two intersubunit bridges in the 70S ribosome. Binds to 23S rRNA. The chain is Large ribosomal subunit protein uL14 from Haloarcula marismortui (strain ATCC 43049 / DSM 3752 / JCM 8966 / VKM B-1809) (Halobacterium marismortui).